The primary structure comprises 324 residues: MKRGLFLTLFFLLILGIAGHWAWNSFGSKPNSMQVTNNIELIEIDHDVLIGLGNGFFVKVDNSTFMMSLKVLVKGEQVEHRVYRLKNGKSELVGKLDVPFVVDVPALWIDNEVLLFGGMNPGNITLVPVVYAYNPENGSMREFAEMPFRDYDQLSLLWDGSKAYLFVRFLNGNLSAYSFDPYAKKFQCLDLGFPEGFVFPGTSKYAAVWYKGKGYFVHGDRIAVFDPSSKNLVWAQVRLPDKYWARTAVATDRGIYIFGGFDDNVNFSRNIYLFVPENNTLTRVGTLPYPLGQAPGGWDGRRIYIVGGRGPGPNKYIVIFTPKG.

Kelch repeat units follow at residues 112 to 160 (EVLL…LWDG), 254 to 301 (GIYI…WDGR), and 303 to 323 (IYIV…FTPK).

The sequence is that of Kelch domain-containing protein PF0436 from Pyrococcus furiosus (strain ATCC 43587 / DSM 3638 / JCM 8422 / Vc1).